Reading from the N-terminus, the 393-residue chain is Endoglucanase 1 (393 aa).

An N-terminal signal peptide occupies residues 1–26 (MAFKLNIGLLALSLSLSLVHLDGVRA). Asp-34 acts as the Nucleophile in catalysis. Asp-152 functions as the Proton donor in the catalytic mechanism. The segment at 233-393 (GCQRKDDNTI…GGHKKCHKKH (161 aa)) is disordered. Low complexity-rich tracts occupy residues 319 to 329 (QGSSNGDATTG) and 337 to 370 (DSGS…NPGA). Asn-343 carries an N-linked (GlcNAc...) asparagine glycan. A compositionally biased stretch (gly residues) spans 371-384 (AQGGQGGAQPGPSG).

This sequence belongs to the glycosyl hydrolase 45 (cellulase K) family. May also be O-glycosylated. In terms of tissue distribution, hyphal tip.

It is found in the secreted. The enzyme catalyses Endohydrolysis of (1-&gt;4)-beta-D-glucosidic linkages in cellulose, lichenin and cereal beta-D-glucans.. This is Endoglucanase 1 (EGL1) from Mycosarcoma maydis (Corn smut fungus).